Reading from the N-terminus, the 201-residue chain is Small ribosomal subunit protein uS4c (201 aa).

Residues 15 to 43 form a disordered region; it reads LGALPGLTNKRPRAGSDLRNQSRSGKKSQ. In terms of domain architecture, S4 RNA-binding spans 89-152; sequence MRLDNILFRL…NSRTLIQNSL (64 aa).

This sequence belongs to the universal ribosomal protein uS4 family. As to quaternary structure, part of the 30S ribosomal subunit. Contacts protein S5. The interaction surface between S4 and S5 is involved in control of translational fidelity.

It is found in the plastid. Its subcellular location is the chloroplast. Functionally, one of the primary rRNA binding proteins, it binds directly to 16S rRNA where it nucleates assembly of the body of the 30S subunit. Its function is as follows. With S5 and S12 plays an important role in translational accuracy. The chain is Small ribosomal subunit protein uS4c (rps4) from Panax ginseng (Korean ginseng).